Consider the following 617-residue polypeptide: Sodium-coupled monocarboxylate transporter 2 (617 aa).

Residues 1–5 (MEVKN) are Extracellular-facing. Residues 6–26 (FAVWDYVVFAALFIISSGIGV) traverse the membrane as a helical segment. Topologically, residues 27 to 47 (FYAIKERKKATSREFLVGGRQ) are cytoplasmic. The helical transmembrane segment at 48-68 (MSFGPVALSLTASFMSAVTVL) threads the bilayer. Topologically, residues 69–80 (GTPADVYRFGAS) are extracellular. Residues 81-101 (FVLFFITYGLVIILTSELFLP) form a helical membrane-spanning segment. The Cytoplasmic portion of the chain corresponds to 102–128 (VFYRSGITSTYEYLQLRFNKPVRYAAT). The helical transmembrane segment at 129–149 (VIYIVQTILYTGVVVYAPALA) threads the bilayer. The Extracellular segment spans residues 150 to 157 (LNQVTGFD). Residues 158–178 (LWGSVFATGIVCTFYCTLGGL) traverse the membrane as a helical segment. At 179–180 (KA) the chain is on the cytoplasmic side. A helical membrane pass occupies residues 181–201 (VVWTDAFQMVVMIVGFLTVLI). Residues 202 to 235 (QGSTYAGGLHNVLEQAENGSRLNIFDFDIDPLRR) are Extracellular-facing. N219 carries N-linked (GlcNAc...) asparagine glycosylation. Residues 236 to 256 (HTFWTISVGGTFTWLGIYGVN) traverse the membrane as a helical segment. Over 257–273 (QSTIQRCISCKTEKHAK) the chain is Cytoplasmic. A helical transmembrane segment spans residues 274–294 (LALYFNLLGLWIILLCAVFSG). Residues 295-334 (LTMYAHFKDCDPWTSGIISAPDQLMPYFVMELFSTMPGLP) lie on the Extracellular side of the membrane. The helical transmembrane segment at 335-357 (GLFVACAFSGTLSTVAASINALA) threads the bilayer. Over 358-385 (TVTFEDFVKSCFPRLSDKLSTWISKGLC) the chain is Cytoplasmic. Residues 386 to 406 (LLFGVICTSTAVAASLMGGVI) traverse the membrane as a helical segment. Over 407-411 (QAALS) the chain is Extracellular. Residues 412-432 (IHGMCGGPMLGLFSLGILFPF) form a helical membrane-spanning segment. Residues 433 to 437 (VNWKG) are Cytoplasmic-facing. A helical transmembrane segment spans residues 438-458 (ALAGLLTGILLSFWVAIGAFI). The Extracellular portion of the chain corresponds to 459–507 (YPAPASKTWPLPLSTDQCGLSNVTESVPPVLSSRPAIAETWYALSYLHY). N480 carries an N-linked (GlcNAc...) asparagine glycan. The chain crosses the membrane as a helical span at residues 508–528 (STVGCLGCIAAGVIISFLTGL). The Cytoplasmic portion of the chain corresponds to 529 to 617 (QKGKDIPPLL…NMALEKITHF (89 aa)).

It belongs to the sodium:solute symporter (SSF) (TC 2.A.21) family.

Its subcellular location is the apical cell membrane. The enzyme catalyses (S)-lactate(out) + Na(+)(out) = (S)-lactate(in) + Na(+)(in). It catalyses the reaction nicotinate(out) + Na(+)(out) = nicotinate(in) + Na(+)(in). The catalysed reaction is pyruvate(out) + Na(+)(out) = pyruvate(in) + Na(+)(in). It carries out the reaction propanoate(out) + Na(+)(out) = propanoate(in) + Na(+)(in). The enzyme catalyses butanoate(out) + Na(+)(out) = butanoate(in) + Na(+)(in). It catalyses the reaction acetoacetate(out) + Na(+)(out) = acetoacetate(in) + Na(+)(in). Acts as an electroneutral and low-affinity sodium (Na(+))-dependent sodium-coupled solute transporter. Catalyzes the transport across the plasma membrane of many monocarboxylates such as lactate, pyruvate, nicotinate, propionate, butyrate and beta-D-hydroxybutyrate. May be responsible for the first step of reabsorption of monocarboxylates from the lumen of the proximal tubule of the kidney and the small intestine. May play also a role in monocarboxylates transport in the retina. Mediates electroneutral uptake of lactate, with a stoichiometry of 2 Na(+) for each lactate. The polypeptide is Sodium-coupled monocarboxylate transporter 2 (SLC5A12) (Bos taurus (Bovine)).